We begin with the raw amino-acid sequence, 71 residues long: Gas vesicle protein A (71 aa).

The segment at 12–22 (LAEVIDRILDK) is alpha helix 1. Residues 23–32 (GIVIDAWVRV) are beta-strand 1. The tract at residues 33–36 (SLVG) is beta turn. Positions 37-46 (IELLAIEARI) are beta-strand 2. The interval 47–70 (VIASVETYLKYAEAVGLTQSAAVP) is alpha helix 2.

This sequence belongs to the gas vesicle GvpA family. The gas vesicle shell is 2 nm thick and consists of a single layer of this protein. It forms helical ribs nearly perpendicular to the long axis of the vesicle.

The protein localises to the gas vesicle shell. Gas vesicles (GV) are hollow, gas filled proteinaceous nanostructures found in some microorganisms. During planktonic growth they allow positioning of the organism at a favorable depth for light or nutrient acquisition. GVs are highly permeable to gas. GvpA forms the protein shell. The ratio of GvpA:GvpC is estimated to be 33:1 and more recently 25:1. The chain is Gas vesicle protein A from Dolichospermum flosaquae (Anabaena flos-aquae).